The primary structure comprises 456 residues: Kynurenine 3-monooxygenase (456 aa).

This sequence belongs to the aromatic-ring hydroxylase family. KMO subfamily. It depends on FAD as a cofactor.

It catalyses the reaction L-kynurenine + NADPH + O2 + H(+) = 3-hydroxy-L-kynurenine + NADP(+) + H2O. The protein operates within cofactor biosynthesis; NAD(+) biosynthesis; quinolinate from L-kynurenine: step 1/3. In terms of biological role, catalyzes the hydroxylation of L-kynurenine (L-Kyn) to form 3-hydroxy-L-kynurenine (L-3OHKyn). Required for synthesis of quinolinic acid. This is Kynurenine 3-monooxygenase from Xanthomonas campestris pv. campestris (strain 8004).